The sequence spans 303 residues: Probable cell division protein WhiA (303 aa).

Residues 272–303 constitute a DNA-binding region (H-T-H motif); it reads SIQQLADSLSTPLTKSGVNHRLRKINKIADEL.

The protein belongs to the WhiA family.

Functionally, involved in cell division and chromosome segregation. The sequence is that of Probable cell division protein WhiA from Streptococcus pneumoniae (strain Hungary19A-6).